The sequence spans 353 residues: Photosystem II D2 protein (353 aa).

Thr-2 bears the N-acetylthreonine mark. The residue at position 2 (Thr-2) is a Phosphothreonine. A helical transmembrane segment spans residues 41-61 (CAYFALGGWFTGTTFVTSWYT). His-118 contacts chlorophyll a. The helical transmembrane segment at 125-141 (GFMLRQFELSRSVQLRP) threads the bilayer. Pheophytin a-binding residues include Gln-130 and Asn-143. The helical transmembrane segment at 153–166 (VFVSVFLIYPLGQS) threads the bilayer. His-198 contributes to the chlorophyll a binding site. The helical transmembrane segment at 208–228 (AALLCAIHGATVENTLFEDGD) threads the bilayer. The a plastoquinone site is built by His-215 and Phe-262. His-215 lines the Fe cation pocket. His-269 contacts Fe cation. Residues 279 to 295 (GLWMSALGVVGLALNLR) form a helical membrane-spanning segment.

It belongs to the reaction center PufL/M/PsbA/D family. As to quaternary structure, PSII is composed of 1 copy each of membrane proteins PsbA, PsbB, PsbC, PsbD, PsbE, PsbF, PsbH, PsbI, PsbJ, PsbK, PsbL, PsbM, PsbT, PsbX, PsbY, PsbZ, Psb30/Ycf12, at least 3 peripheral proteins of the oxygen-evolving complex and a large number of cofactors. It forms dimeric complexes. It depends on The D1/D2 heterodimer binds P680, chlorophylls that are the primary electron donor of PSII, and subsequent electron acceptors. It shares a non-heme iron and each subunit binds pheophytin, quinone, additional chlorophylls, carotenoids and lipids. There is also a Cl(-1) ion associated with D1 and D2, which is required for oxygen evolution. The PSII complex binds additional chlorophylls, carotenoids and specific lipids. as a cofactor.

Its subcellular location is the plastid. It localises to the chloroplast thylakoid membrane. It catalyses the reaction 2 a plastoquinone + 4 hnu + 2 H2O = 2 a plastoquinol + O2. In terms of biological role, photosystem II (PSII) is a light-driven water:plastoquinone oxidoreductase that uses light energy to abstract electrons from H(2)O, generating O(2) and a proton gradient subsequently used for ATP formation. It consists of a core antenna complex that captures photons, and an electron transfer chain that converts photonic excitation into a charge separation. The D1/D2 (PsbA/PsbD) reaction center heterodimer binds P680, the primary electron donor of PSII as well as several subsequent electron acceptors. D2 is needed for assembly of a stable PSII complex. This is Photosystem II D2 protein from Arabis hirsuta (Hairy rock-cress).